We begin with the raw amino-acid sequence, 454 residues long: UDP-N-acetylmuramate--L-alanine ligase (454 aa).

Residue 113-119 coordinates ATP; that stretch reads GSHGKTT.

It belongs to the MurCDEF family.

It is found in the cytoplasm. The enzyme catalyses UDP-N-acetyl-alpha-D-muramate + L-alanine + ATP = UDP-N-acetyl-alpha-D-muramoyl-L-alanine + ADP + phosphate + H(+). Its pathway is cell wall biogenesis; peptidoglycan biosynthesis. Cell wall formation. In Aquifex aeolicus (strain VF5), this protein is UDP-N-acetylmuramate--L-alanine ligase.